A 195-amino-acid chain; its full sequence is IMP cyclohydrolase (195 aa).

This sequence belongs to the archaeal IMP cyclohydrolase family.

The enzyme catalyses IMP + H2O = 5-formamido-1-(5-phospho-D-ribosyl)imidazole-4-carboxamide. It functions in the pathway purine metabolism; IMP biosynthesis via de novo pathway; IMP from 5-formamido-1-(5-phospho-D-ribosyl)imidazole-4-carboxamide: step 1/1. In terms of biological role, catalyzes the cyclization of 5-formylamidoimidazole-4-carboxamide ribonucleotide to IMP. The chain is IMP cyclohydrolase from Haloquadratum walsbyi (strain DSM 16790 / HBSQ001).